The following is a 508-amino-acid chain: Rhamnogalacturonan I rhamnosyltransferase 1 (508 aa).

The helical; Signal-anchor for type II membrane protein transmembrane segment at 41-63 (LWMIRAVTVLLLWSCFVHLMALG) threads the bilayer. N-linked (GlcNAc...) asparagine glycosylation is found at Asn-136, Asn-202, and Asn-223. 277 to 279 (HLR) provides a ligand contact to substrate. The N-linked (GlcNAc...) asparagine glycan is linked to Asn-391.

This sequence belongs to the glycosyltransferase GT106 family. As to expression, highly expressed in siliques. Expressed in stems and flowers. Expressed at low levels in roots and rosette leaves.

The protein localises to the golgi apparatus membrane. The enzyme catalyses alpha-D-galacturonosyl-[(1-&gt;2)-alpha-L-rhamnosyl-(1-&gt;4)-alpha-D-galacturonosyl](n) + UDP-beta-L-rhamnose = [(1-&gt;2)-alpha-L-rhamnosyl-(1-&gt;4)-alpha-D-galacturonosyl](n+1) + UDP + H(+). It participates in glycan metabolism; pectin biosynthesis. In terms of biological role, glycosyltransferase involved in the formation of rhamnogalacturonan I (RG-I) oligosaccharides in the seed coat mucilage, which is a specialized cell wall with abundant RG-I. Transfers the rhamnose residue from UDP-beta-L-rhamnose to RG-I oligosaccharides. Prefers RG-I oligosaccharides with a degree of polymerization of 5 or larger than 5. Does not act on oligosaccharides with a degree of polymerization of 4 or smaller than 4. Does not require metal ions for its activity. The protein is Rhamnogalacturonan I rhamnosyltransferase 1 of Arabidopsis thaliana (Mouse-ear cress).